We begin with the raw amino-acid sequence, 245 residues long: 1-acyl-sn-glycerol-3-phosphate acyltransferase (245 aa).

Residue M1 is modified to N-formylmethionine. The short motif at 73-78 is the HXXXXD motif element; it reads HQNNYD.

It belongs to the 1-acyl-sn-glycerol-3-phosphate acyltransferase family.

It is found in the cell inner membrane. It carries out the reaction a 1-acyl-sn-glycero-3-phosphate + an acyl-CoA = a 1,2-diacyl-sn-glycero-3-phosphate + CoA. It catalyses the reaction a fatty acyl-[ACP] + a 1-acyl-sn-glycero-3-phosphate = a 1,2-diacyl-sn-glycero-3-phosphate + holo-[ACP]. It participates in phospholipid metabolism; CDP-diacylglycerol biosynthesis; CDP-diacylglycerol from sn-glycerol 3-phosphate: step 2/3. Functionally, converts lysophosphatidic acid (LPA) into phosphatidic acid by incorporating an acyl moiety at the 2 position. This enzyme can utilize either acyl-CoA or acyl-ACP as the fatty acyl donor. This Escherichia coli (strain K12) protein is 1-acyl-sn-glycerol-3-phosphate acyltransferase (plsC).